The primary structure comprises 423 residues: Amino sugar nitrososynthase RubN8 (423 aa).

It belongs to the acyl-CoA dehydrogenase family. The cofactor is FAD.

The protein operates within antibiotic biosynthesis. Its function is as follows. Nitrososynthase involved in the biosynthesis of rubradirin, an ansamycin antibiotic. In vitro, catalyzes the double-oxidation of TDP-L-epi-vancosamine to TDP-L-epi-vancosonitrose. In vivo, probably catalyzes the formation of D-rubranitrose, the nitro sugar moiety of rubradirin. This chain is Amino sugar nitrososynthase RubN8, found in Streptomyces rubradiris (Streptomyces achromogenes subsp. rubradiris).